The primary structure comprises 189 residues: Recombination protein RecR (189 aa).

The C4-type zinc finger occupies 48–63 (CQTCFHLSAEPLCDIC). The Toprim domain maps to 71 to 165 (QLLCVVADSR…QVSRIAYGLP (95 aa)).

Belongs to the RecR family.

Its function is as follows. May play a role in DNA repair. It seems to be involved in an RecBC-independent recombinational process of DNA repair. It may act with RecF and RecO. The sequence is that of Recombination protein RecR from Prochlorococcus marinus (strain MIT 9313).